A 242-amino-acid chain; its full sequence is Ribosomal RNA large subunit methyltransferase E (242 aa).

S-adenosyl-L-methionine contacts are provided by Gly88, Trp90, Asp111, Asp127, and Asp151. Lys191 (proton acceptor) is an active-site residue.

The protein belongs to the class I-like SAM-binding methyltransferase superfamily. RNA methyltransferase RlmE family.

The protein resides in the cytoplasm. The enzyme catalyses uridine(2552) in 23S rRNA + S-adenosyl-L-methionine = 2'-O-methyluridine(2552) in 23S rRNA + S-adenosyl-L-homocysteine + H(+). Functionally, specifically methylates the uridine in position 2552 of 23S rRNA at the 2'-O position of the ribose in the fully assembled 50S ribosomal subunit. The sequence is that of Ribosomal RNA large subunit methyltransferase E from Bartonella tribocorum (strain CIP 105476 / IBS 506).